The chain runs to 268 residues: Nickel import ATP-binding protein NikE (268 aa).

In terms of domain architecture, ABC transporter spans 4–252 (LNVSDLSHHY…SSDAGRVLQN (249 aa)). 45–52 (GRSGCGKS) is an ATP binding site.

This sequence belongs to the ABC transporter superfamily. Nickel importer (TC 3.A.1.5.3) family. The complex is composed of two ATP-binding proteins (NikD and NikE), two transmembrane proteins (NikB and NikC) and a solute-binding protein (NikA).

Its subcellular location is the cell inner membrane. It catalyses the reaction Ni(2+)(out) + ATP + H2O = Ni(2+)(in) + ADP + phosphate + H(+). Part of the ABC transporter complex NikABCDE involved in nickel import. Responsible for energy coupling to the transport system. This Escherichia coli O6:K15:H31 (strain 536 / UPEC) protein is Nickel import ATP-binding protein NikE.